A 185-amino-acid chain; its full sequence is Potassium-transporting ATPase KdpC subunit (185 aa).

A helical transmembrane segment spans residues 14 to 34; that stretch reads ALSLLTGVAYPLALTGIAAVI.

The protein belongs to the KdpC family. The system is composed of three essential subunits: KdpA, KdpB and KdpC.

It is found in the cell inner membrane. Part of the high-affinity ATP-driven potassium transport (or Kdp) system, which catalyzes the hydrolysis of ATP coupled with the electrogenic transport of potassium into the cytoplasm. This subunit acts as a catalytic chaperone that increases the ATP-binding affinity of the ATP-hydrolyzing subunit KdpB by the formation of a transient KdpB/KdpC/ATP ternary complex. The sequence is that of Potassium-transporting ATPase KdpC subunit from Cereibacter sphaeroides (strain ATCC 17023 / DSM 158 / JCM 6121 / CCUG 31486 / LMG 2827 / NBRC 12203 / NCIMB 8253 / ATH 2.4.1.) (Rhodobacter sphaeroides).